Reading from the N-terminus, the 210-residue chain is Ribosomal RNA small subunit methyltransferase G (210 aa).

Residues Gly-76, Leu-81, 127–128 (VE), and Arg-142 each bind S-adenosyl-L-methionine.

It belongs to the methyltransferase superfamily. RNA methyltransferase RsmG family.

It is found in the cytoplasm. It catalyses the reaction guanosine(527) in 16S rRNA + S-adenosyl-L-methionine = N(7)-methylguanosine(527) in 16S rRNA + S-adenosyl-L-homocysteine. In terms of biological role, specifically methylates the N7 position of guanine in position 527 of 16S rRNA. The chain is Ribosomal RNA small subunit methyltransferase G from Vibrio cholerae serotype O1 (strain ATCC 39315 / El Tor Inaba N16961).